The following is an 83-amino-acid chain: MTDVAATDIAAYSFEKAVAELESIVARLERGDVALDESISIYERGELLKKHCEALLSAAENRIEKIRLDRAGKPVGAEPLDKD.

The protein belongs to the XseB family. In terms of assembly, heterooligomer composed of large and small subunits.

Its subcellular location is the cytoplasm. It carries out the reaction Exonucleolytic cleavage in either 5'- to 3'- or 3'- to 5'-direction to yield nucleoside 5'-phosphates.. In terms of biological role, bidirectionally degrades single-stranded DNA into large acid-insoluble oligonucleotides, which are then degraded further into small acid-soluble oligonucleotides. The protein is Exodeoxyribonuclease 7 small subunit of Allorhizobium ampelinum (strain ATCC BAA-846 / DSM 112012 / S4) (Agrobacterium vitis (strain S4)).